The primary structure comprises 248 residues: DNA polymerase sliding clamp (248 aa).

This sequence belongs to the PCNA family. As to quaternary structure, homotrimer. The subunits circularize to form a toroid; DNA passes through its center. Replication factor C (RFC) is required to load the toroid on the DNA.

Its function is as follows. Sliding clamp subunit that acts as a moving platform for DNA processing. Responsible for tethering the catalytic subunit of DNA polymerase and other proteins to DNA during high-speed replication. This is DNA polymerase sliding clamp from Nitrosopumilus maritimus (strain SCM1).